Consider the following 96-residue polypeptide: Integration host factor subunit beta (96 aa).

Residues 59 to 86 (RVGRNPKTGETVELDGKHVPHFKPGKEL) form a disordered region. Basic and acidic residues predominate over residues 72–86 (LDGKHVPHFKPGKEL).

The protein belongs to the bacterial histone-like protein family. As to quaternary structure, heterodimer of an alpha and a beta chain.

In terms of biological role, this protein is one of the two subunits of integration host factor, a specific DNA-binding protein that functions in genetic recombination as well as in transcriptional and translational control. This is Integration host factor subunit beta from Pseudoalteromonas atlantica (strain T6c / ATCC BAA-1087).